Reading from the N-terminus, the 357-residue chain is UPF0324 membrane protein BMEI1914 (357 aa).

Transmembrane regions (helical) follow at residues N29–E48, A58–A77, S90–I112, G117–I136, L149–A171, A181–L203, I210–L232, L242–N261, P268–L290, A300–I322, and L334–V356.

Belongs to the UPF0324 family.

It localises to the cell membrane. The protein is UPF0324 membrane protein BMEI1914 of Brucella melitensis biotype 1 (strain ATCC 23456 / CCUG 17765 / NCTC 10094 / 16M).